We begin with the raw amino-acid sequence, 203 residues long: Small ribosomal subunit protein uS4 (203 aa).

The segment at 1 to 46 (MSKRQSAKYKLDRRMGENIWGRPKSPVNRREYGPGQHGQRRKGKMS) is disordered. Residues 94 to 157 (RRLDAVVYRA…QEMALVAEAQ (64 aa)) form the S4 RNA-binding domain.

It belongs to the universal ribosomal protein uS4 family. In terms of assembly, part of the 30S ribosomal subunit. Contacts protein S5. The interaction surface between S4 and S5 is involved in control of translational fidelity.

Its function is as follows. One of the primary rRNA binding proteins, it binds directly to 16S rRNA where it nucleates assembly of the body of the 30S subunit. Functionally, with S5 and S12 plays an important role in translational accuracy. In Sphingopyxis alaskensis (strain DSM 13593 / LMG 18877 / RB2256) (Sphingomonas alaskensis), this protein is Small ribosomal subunit protein uS4.